A 218-amino-acid chain; its full sequence is tRNA (guanine-N(7)-)-methyltransferase (218 aa).

Positions 46, 71, 98, and 120 each coordinate S-adenosyl-L-methionine. Aspartate 120 is an active-site residue. Position 124 (lysine 124) interacts with substrate. The interval 126–131 (RHEKRR) is interaction with RNA. Residues aspartate 156 and 196 to 199 (TEYE) each bind substrate.

This sequence belongs to the class I-like SAM-binding methyltransferase superfamily. TrmB family.

It catalyses the reaction guanosine(46) in tRNA + S-adenosyl-L-methionine = N(7)-methylguanosine(46) in tRNA + S-adenosyl-L-homocysteine. The protein operates within tRNA modification; N(7)-methylguanine-tRNA biosynthesis. Catalyzes the formation of N(7)-methylguanine at position 46 (m7G46) in tRNA. The sequence is that of tRNA (guanine-N(7)-)-methyltransferase from Lactobacillus johnsonii (strain CNCM I-12250 / La1 / NCC 533).